The sequence spans 414 residues: Histidine--tRNA ligase (414 aa).

It belongs to the class-II aminoacyl-tRNA synthetase family. As to quaternary structure, homodimer.

The protein resides in the cytoplasm. The catalysed reaction is tRNA(His) + L-histidine + ATP = L-histidyl-tRNA(His) + AMP + diphosphate + H(+). This is Histidine--tRNA ligase from Mycoplasma capricolum subsp. capricolum (strain California kid / ATCC 27343 / NCTC 10154).